A 513-amino-acid polypeptide reads, in one-letter code: ATP synthase subunit alpha 2 (513 aa).

152–159 (GDSKTGKT) contributes to the ATP binding site.

This sequence belongs to the ATPase alpha/beta chains family. As to quaternary structure, F-type ATPases have 2 components, CF(1) - the catalytic core - and CF(0) - the membrane proton channel. CF(1) has five subunits: alpha(3), beta(3), gamma(1), delta(1), epsilon(1). CF(0) has three main subunits: a(1), b(2) and c(9-12). The alpha and beta chains form an alternating ring which encloses part of the gamma chain. CF(1) is attached to CF(0) by a central stalk formed by the gamma and epsilon chains, while a peripheral stalk is formed by the delta and b chains.

The protein localises to the cell membrane. It carries out the reaction ATP + H2O + 4 H(+)(in) = ADP + phosphate + 5 H(+)(out). Functionally, produces ATP from ADP in the presence of a proton gradient across the membrane. The alpha chain is a regulatory subunit. This Mycoplasmopsis pulmonis (strain UAB CTIP) (Mycoplasma pulmonis) protein is ATP synthase subunit alpha 2.